Consider the following 346-residue polypeptide: Fe(3+) ions import ATP-binding protein FbpC 1 (346 aa).

The region spanning 5 to 235 is the ABC transporter domain; it reads LEVDGVDKSF…PIDVPTAEFI (231 aa). Residue 37–44 coordinates ATP; it reads GPSGCGKT.

The protein belongs to the ABC transporter superfamily. Fe(3+) ion importer (TC 3.A.1.10) family. As to quaternary structure, the complex is composed of two ATP-binding proteins (FbpC), two transmembrane proteins (FbpB) and a solute-binding protein (FbpA).

The protein localises to the cell membrane. It carries out the reaction Fe(3+)(out) + ATP + H2O = Fe(3+)(in) + ADP + phosphate + H(+). Functionally, part of the ABC transporter complex FbpABC involved in Fe(3+) ions import. Responsible for energy coupling to the transport system. This is Fe(3+) ions import ATP-binding protein FbpC 1 from Rhodococcus jostii (strain RHA1).